The sequence spans 228 residues: Interferon-induced transmembrane protein 10 (228 aa).

Topologically, residues 1–154 (MREGKRGPPC…PDTTEVNDYY (154 aa)) are extracellular. The segment at 29–49 (AQGPGQCPAPLGDPASTTDGA) is disordered. A helical membrane pass occupies residues 155 to 175 (LWSIFNFVYLNFCCLGFIALA). Residues Cys167 and Cys168 are each lipidated (S-palmitoyl cysteine). Over 176–200 (YSLKVRDKKLLNDLNGAVEDAKTAR) the chain is Cytoplasmic. Residues 201-221 (LFNITSSALAASCIILVFIFL) traverse the membrane as a helical segment. The Extracellular portion of the chain corresponds to 222-228 (RYPLTDY).

It belongs to the CD225/Dispanin family.

It localises to the cell membrane. The protein is Interferon-induced transmembrane protein 10 (IFITM10) of Homo sapiens (Human).